A 91-amino-acid polypeptide reads, in one-letter code: MTSTFFKYSVLLLPALINLAAFLTNFQTNTLPVEPINLYLSNFVHSDFYHLTGNIVVYIVSAFLSFIFFRNSDMKGFSGYLLPSYSFLYHI.

Transmembrane regions (helical) follow at residues 5 to 27 and 47 to 69; these read FFKY…TNFQ and DFYH…FIFF.

The protein resides in the cell membrane. This is an uncharacterized protein from Archaeoglobus fulgidus (strain ATCC 49558 / DSM 4304 / JCM 9628 / NBRC 100126 / VC-16).